Here is a 59-residue protein sequence, read N- to C-terminus: Cuticle protein 7 isoform c (59 aa).

The residue at position 1 (Gln-1) is a Pyrrolidone carboxylic acid.

The sequence is that of Cuticle protein 7 isoform c from Limulus polyphemus (Atlantic horseshoe crab).